The primary structure comprises 969 residues: Translation initiation factor IF-2 (969 aa).

Residues 50-370 (SFASKSAPAN…QAPSVGGVRL (321 aa)) are disordered. Residues 54 to 76 (KSAPANGAKPGPAASARPGAKPT) are compositionally biased toward low complexity. A compositionally biased stretch (pro residues) spans 77–87 (PGGPRPGPRTP). Over residues 88–102 (APAASAPQAPAEQTA) the composition is skewed to low complexity. The span at 112–124 (AVKPGPAPTPARP) shows a compositional bias: pro residues. The span at 125-164 (AAPEAPAAKAAPEAPAQRPTPGGPRPGQQQQRPGAPAQGG) shows a compositional bias: low complexity. The segment covering 240–267 (PGGPRPSPGSMPPRPNPGAMPQRTPRPG) has biased composition (pro residues). Gly residues predominate over residues 269-340 (SAGGRPGRPG…GAAGAFGRPG (72 aa)). The span at 344-353 (RRGRKSKRQK) shows a compositional bias: basic residues. Residues 465 to 636 (VRPPVVTVMG…AVLLTADAAL (172 aa)) form the tr-type G domain. Positions 474 to 481 (GHVDHGKT) are G1. Residue 474-481 (GHVDHGKT) participates in GTP binding. Positions 499–503 (GITQH) are G2. Positions 524–527 (DTPG) are G3. Residues 524-528 (DTPGH) and 578-581 (NKID) each bind GTP. Residues 578–581 (NKID) are G4. The tract at residues 614–616 (SAK) is G5.

Belongs to the TRAFAC class translation factor GTPase superfamily. Classic translation factor GTPase family. IF-2 subfamily.

The protein localises to the cytoplasm. Its function is as follows. One of the essential components for the initiation of protein synthesis. Protects formylmethionyl-tRNA from spontaneous hydrolysis and promotes its binding to the 30S ribosomal subunits. Also involved in the hydrolysis of GTP during the formation of the 70S ribosomal complex. This Nocardia farcinica (strain IFM 10152) protein is Translation initiation factor IF-2.